The following is a 252-amino-acid chain: Triosephosphate isomerase (252 aa).

Residue 10–12 participates in substrate binding; the sequence is NWK. Catalysis depends on His96, which acts as the Electrophile. Glu168 serves as the catalytic Proton acceptor. Substrate-binding positions include Gly174, Ser214, and 235-236; that span reads GG.

Belongs to the triosephosphate isomerase family. As to quaternary structure, homodimer.

The protein resides in the cytoplasm. The catalysed reaction is D-glyceraldehyde 3-phosphate = dihydroxyacetone phosphate. It participates in carbohydrate biosynthesis; gluconeogenesis. Its pathway is carbohydrate degradation; glycolysis; D-glyceraldehyde 3-phosphate from glycerone phosphate: step 1/1. In terms of biological role, involved in the gluconeogenesis. Catalyzes stereospecifically the conversion of dihydroxyacetone phosphate (DHAP) to D-glyceraldehyde-3-phosphate (G3P). This chain is Triosephosphate isomerase, found in Streptococcus pyogenes serotype M5 (strain Manfredo).